The following is an 819-amino-acid chain: Tegument protein UL47 homolog (819 aa).

Residues 1 to 15 are compositionally biased toward basic residues; it reads MQSGHYNRRQSRRQR. Disordered regions lie at residues 1–42 and 58–221; these read MQSG…THPP and LNSE…DYFS. The Nuclear localization signal motif lies at 11-31; it reads SRRQRISSNTTDSPRHTHGTR. Positions 32–42 are enriched in polar residues; sequence YRSTNWYTHPP. The span at 62-72 shows a compositional bias: acidic residues; sequence MDQDSSSDASD. The span at 82–93 shows a compositional bias: polar residues; sequence STYNGSEQNTST. Residues 94–109 are compositionally biased toward basic and acidic residues; sequence SRHENRIFKLTEREAN. Repeat copies occupy residues 117 to 132, 133 to 148, 149 to 164, 165 to 190, and 191 to 206. The segment at 117-218 is 6 X 16 AA approximate tandem repeats; the sequence is DAIDDEGEAE…IDDEGEAEED (102 aa). Acidic residues predominate over residues 118–219; it reads AIDDEGEAEE…DDEGEAEEDY (102 aa). The stretch at 207-218 is one 1-6; truncated repeat; the sequence is DAIDDEGEAEED. Residues 785 to 807 carry the Nuclear export signal motif; it reads QPIPSVDLAENLMQYRNEILGLD.

It belongs to the alphaherpesvirinae HHV-1 UL47 family. As to quaternary structure, interacts with US3 kinase. Interacts with ORF24 and ORF27; these interactions seem important for efficient virion nuclear egress. Interacts with ORF17/VHS. Interacts with ORF9. In terms of processing, phosphorylated by US3. This phosphorylation is required for proper nuclear localization.

Its subcellular location is the virion tegument. It localises to the host nucleus. The protein resides in the host cytoplasm. Tegument protein that can bind to various RNA transcripts. Plays a role in the attenuation of selective viral and cellular mRNA degradation by modulating the activity of host shutoff RNase ORF17/VHS. Also plays a role in the primary envelopment of virions in the perinuclear space, probably by interacting with two nuclear egress proteins ORF24 and ORF27. In Varicella-zoster virus (strain Dumas) (HHV-3), this protein is Tegument protein UL47 homolog.